The primary structure comprises 75 residues: DNA-directed RNA polymerase subunit Rpo5 (75 aa).

It belongs to the archaeal Rpo5/eukaryotic RPB5 RNA polymerase subunit family. In terms of assembly, part of the RNA polymerase complex.

It localises to the cytoplasm. The enzyme catalyses RNA(n) + a ribonucleoside 5'-triphosphate = RNA(n+1) + diphosphate. In terms of biological role, DNA-dependent RNA polymerase (RNAP) catalyzes the transcription of DNA into RNA using the four ribonucleoside triphosphates as substrates. The sequence is that of DNA-directed RNA polymerase subunit Rpo5 from Pyrobaculum aerophilum (strain ATCC 51768 / DSM 7523 / JCM 9630 / CIP 104966 / NBRC 100827 / IM2).